The following is a 366-amino-acid chain: Peptide chain release factor 2 (366 aa).

Gln-253 bears the N5-methylglutamine mark.

The protein belongs to the prokaryotic/mitochondrial release factor family. Methylated by PrmC. Methylation increases the termination efficiency of RF2.

It is found in the cytoplasm. In terms of biological role, peptide chain release factor 2 directs the termination of translation in response to the peptide chain termination codons UGA and UAA. The chain is Peptide chain release factor 2 from Yersinia pestis.